Reading from the N-terminus, the 198-residue chain is uncharacterized protein (198 aa).

The segment at 9–43 (CPVCGGKGTFVITSHQIDIPYFGPVLETTMICEKC) adopts a C4-type zinc-finger fold.

This sequence belongs to the ZPR1 family.

This is an uncharacterized protein from Methanocaldococcus jannaschii (strain ATCC 43067 / DSM 2661 / JAL-1 / JCM 10045 / NBRC 100440) (Methanococcus jannaschii).